The following is a 189-amino-acid chain: UPF0301 protein RC0043 (189 aa).

This sequence belongs to the UPF0301 (AlgH) family.

This Rickettsia conorii (strain ATCC VR-613 / Malish 7) protein is UPF0301 protein RC0043.